Reading from the N-terminus, the 163-residue chain is UPF0262 protein RPE_4483 (163 aa).

Belongs to the UPF0262 family.

This chain is UPF0262 protein RPE_4483, found in Rhodopseudomonas palustris (strain BisA53).